A 224-amino-acid polypeptide reads, in one-letter code: Adenylate kinase (224 aa).

10-15 (GSGKGT) contributes to the ATP binding site. The tract at residues 30-59 (ESGAIFRENISKGTELGAKAKEYIDRGDLV) is NMP. AMP contacts are provided by residues Ser-31, Arg-36, 57 to 59 (DLV), 85 to 88 (GFPR), and Gln-92. The interval 126–165 (GRRLCVNDNNHPNNIFIDAIKPDGDKCRVCGGELKTRSDD) is LID. Arg-127 lines the ATP pocket. AMP contacts are provided by Arg-162 and Arg-174. An ATP-binding site is contributed by Pro-211.

The protein belongs to the adenylate kinase family. Monomer.

The protein localises to the cytoplasm. It carries out the reaction AMP + ATP = 2 ADP. Its pathway is purine metabolism; AMP biosynthesis via salvage pathway; AMP from ADP: step 1/1. Functionally, catalyzes the reversible transfer of the terminal phosphate group between ATP and AMP. Plays an important role in cellular energy homeostasis and in adenine nucleotide metabolism. This is Adenylate kinase from Desulfosudis oleivorans (strain DSM 6200 / JCM 39069 / Hxd3) (Desulfococcus oleovorans).